A 358-amino-acid chain; its full sequence is Nicotinate-nucleotide--dimethylbenzimidazole phosphoribosyltransferase (358 aa).

Glu323 acts as the Proton acceptor in catalysis.

It belongs to the CobT family.

It carries out the reaction 5,6-dimethylbenzimidazole + nicotinate beta-D-ribonucleotide = alpha-ribazole 5'-phosphate + nicotinate + H(+). It participates in nucleoside biosynthesis; alpha-ribazole biosynthesis; alpha-ribazole from 5,6-dimethylbenzimidazole: step 1/2. Catalyzes the synthesis of alpha-ribazole-5'-phosphate from nicotinate mononucleotide (NAMN) and 5,6-dimethylbenzimidazole (DMB). This is Nicotinate-nucleotide--dimethylbenzimidazole phosphoribosyltransferase from Oleidesulfovibrio alaskensis (strain ATCC BAA-1058 / DSM 17464 / G20) (Desulfovibrio alaskensis).